A 415-amino-acid polypeptide reads, in one-letter code: Protrudin (415 aa).

Residues 1 to 24 are disordered; it reads MQTSDRDLSGPEASPSGMPEVLSE. At 1-66 the chain is on the cytoplasmic side; the sequence is MQTSDRDLSG…AGDGVRYLLR (66 aa). Residues 1–92 form a sufficient for homooligomerization region; it reads MQTSDRDLSG…LFLTLNEGAW (92 aa). The sufficient for localization to endoplasmic reticulum tubular network and for interactions with REEP1, REEP5, ATL1, ATL2, ATL3 and SPAST stretch occupies residues 1 to 210; sequence MQTSDRDLSG…LYLLPLCWVL (210 aa). A necessary for interaction with RAB11A and function in neurite outgrowth region spans residues 51–64; it reads LEPLKDAGDGVRYL. A helical transmembrane segment spans residues 67 to 87; that stretch reads WQMPLCSLLTCLGLNILFLTL. Position 88 (N88) is a topological domain, lumenal. A helical transmembrane segment spans residues 89-109; sequence EGAWYSMGALMISVPALLGYL. Residues 110 to 192 are Cytoplasmic-facing; sequence QEVCRGQLPE…NPVVSSQFYG (83 aa). The segment at residues 193-213 is an intramembrane region (helical); sequence ALLGMVCMLYLLPLCWVLALL. Residues 214 to 415 lie on the Cytoplasmic side of the membrane; that stretch reads NSTLFLGNGD…CASCNQTLSK (202 aa). Positions 254 to 290 are disordered; sequence QGAGGRGLLDSSPAPTPTEDLTPGSVEEAEEAEPDEE. The segment at 275-365 is necessary for interaction with KIF5A; sequence TPGSVEEAEE…GCAATFSVLK (91 aa). Positions 280-290 are enriched in acidic residues; that stretch reads EEAEEAEPDEE. The segment at 290–296 is necessary for interaction with VAPA; sequence EFKDAIE. An FYVE-type zinc finger spans residues 348-414; it reads TNNFGNCAGC…VCASCNQTLS (67 aa). Residues C354, C357, C370, C373, C378, C381, C406, and C409 each coordinate Zn(2+).

Can form homooligomers (monomers, dimers and tetramers). Interacts with RAB11A (GDP-bound form); regulates RAB11A. Interacts with FKBP8; may negatively regulate ZFYVE27 phosphorylation. Isoform 1 interacts to a greater extent than isoform 2 with VAPB (via MSP domain). Isoform 1 interacts to a greater extent than isoform 2 with VAPA (via MSP domain). Interaction with VAPA may regulate ZFYVE27 retention in the endoplasmic reticulum and its function in cell projections formation. Interacts with ATL2, ATL3, SPAST and RTN3. Interacts with REEP1, REEP5 and ATL1. Interacts with RAB11B (GDP-bound form), SURF4, KIF5B and KIF5C. Isoform 1 and 2 interact with KIFA. In terms of processing, phosphorylated. Phosphorylation is induced by NGF through the MAPK/ERK pathway and modulates interaction with RAB11A. Astrocytes express both isoform 1 and isoform 2 and oligodendrocytes express only isoform 2 (at protein level). Isoform 1 is expressed specifically in the central nervous system and selectively in neuronal cells. Isoform 2 is expressed in cerebrum, cerebellum, spinal cord, heart, thymus, spleen, intestine and lung.

It localises to the recycling endosome membrane. The protein localises to the endoplasmic reticulum membrane. It is found in the cell projection. Its subcellular location is the growth cone membrane. Functionally, key regulator of RAB11-dependent vesicular trafficking during neurite extension through polarized membrane transport. Promotes axonal elongation and contributes to the establishment of neuronal cell polarity. Involved in nerve growth factor-induced neurite formation in VAPA-dependent manner. Contributes to both the formation and stabilization of the tubular ER network. Involved in ER morphogenesis by regulating the sheet-to-tubule balance and possibly the density of tubule interconnections. Acts as an adapter protein that facilitates the interaction of KIF5A with VAPA, VAPB, SURF4, RAB11A, RAB11B and RTN3 and the ZFYVE27-KIF5A complex contributes to the transport of these proteins in neurons. Can induce formation of neurite-like membrane protrusions in non-neuronal cells in a KIF5A/B-dependent manner. The polypeptide is Protrudin (Zfyve27) (Mus musculus (Mouse)).